A 303-amino-acid polypeptide reads, in one-letter code: Polyisoprenyl-teichoic acid--peptidoglycan teichoic acid transferase TagU (303 aa).

Over 1-4 the chain is Cytoplasmic; that stretch reads MKKK. Residues 5-25 form a helical; Signal-anchor for type II membrane protein membrane-spanning segment; it reads ILFWVLGILGVLIIGGGIYAY. The Extracellular segment spans residues 26–303; it reads NVYSSVSNTL…KLRTHLEVTK (278 aa).

Belongs to the LytR/CpsA/Psr (LCP) family.

The protein localises to the cell membrane. The protein operates within cell wall biogenesis. May catalyze the final step in cell wall teichoic acid biosynthesis, the transfer of the anionic cell wall polymers (APs) from their lipid-linked precursor to the cell wall peptidoglycan (PG). The chain is Polyisoprenyl-teichoic acid--peptidoglycan teichoic acid transferase TagU from Bacillus cereus (strain ZK / E33L).